A 128-amino-acid chain; its full sequence is Large ribosomal subunit protein bL20 (128 aa).

Belongs to the bacterial ribosomal protein bL20 family.

Functionally, binds directly to 23S ribosomal RNA and is necessary for the in vitro assembly process of the 50S ribosomal subunit. It is not involved in the protein synthesizing functions of that subunit. This is Large ribosomal subunit protein bL20 from Kocuria rhizophila (strain ATCC 9341 / DSM 348 / NBRC 103217 / DC2201).